Here is a 124-residue protein sequence, read N- to C-terminus: Large ribosomal subunit protein mL52 (124 aa).

A mitochondrion-targeting transit peptide spans 1–23 (MAALGMLLSTGVRRLHCGSAARA). Residues 99–124 (LQEEKRKQQNALKPKGVLLQNPGPSQ) are disordered.

It belongs to the mitochondrion-specific ribosomal protein mL52 family. Component of the mitochondrial ribosome large subunit (39S) which comprises a 16S rRNA and about 50 distinct proteins.

It is found in the mitochondrion. The polypeptide is Large ribosomal subunit protein mL52 (MRPL52) (Bos taurus (Bovine)).